Here is a 235-residue protein sequence, read N- to C-terminus: V-type proton ATPase subunit E2 (235 aa).

Methionine 1 is subject to N-acetylmethionine. The stretch at lysine 8 to isoleucine 64 forms a coiled coil.

Belongs to the V-ATPase E subunit family. As to quaternary structure, V-ATPase is a heteromultimeric enzyme composed of a peripheral catalytic V1 complex (components A to H) attached to an integral membrane V0 proton pore complex (components: a, c, c'', d and e).

It localises to the vacuole membrane. Subunit of the peripheral V1 complex of vacuolar ATPase essential for assembly or catalytic function. V-ATPase is responsible for acidifying a variety of intracellular compartments in eukaryotic cells. This is V-type proton ATPase subunit E2 (VHA-E2) from Arabidopsis thaliana (Mouse-ear cress).